The primary structure comprises 228 residues: 7-cyano-7-deazaguanine synthase (228 aa).

Residue 8–18 (LSGGLDSTTCL) participates in ATP binding. Zn(2+) is bound by residues Cys-188, Cys-198, Cys-201, and Cys-204.

This sequence belongs to the QueC family. Requires Zn(2+) as cofactor.

The catalysed reaction is 7-carboxy-7-deazaguanine + NH4(+) + ATP = 7-cyano-7-deazaguanine + ADP + phosphate + H2O + H(+). It participates in purine metabolism; 7-cyano-7-deazaguanine biosynthesis. Catalyzes the ATP-dependent conversion of 7-carboxy-7-deazaguanine (CDG) to 7-cyano-7-deazaguanine (preQ(0)). This chain is 7-cyano-7-deazaguanine synthase, found in Legionella pneumophila subsp. pneumophila (strain Philadelphia 1 / ATCC 33152 / DSM 7513).